The chain runs to 185 residues: V-type ATP synthase subunit E (185 aa).

Belongs to the V-ATPase E subunit family.

Functionally, produces ATP from ADP in the presence of a proton gradient across the membrane. The polypeptide is V-type ATP synthase subunit E (Deinococcus geothermalis (strain DSM 11300 / CIP 105573 / AG-3a)).